A 411-amino-acid chain; its full sequence is Phosphoribosylaminoimidazole-succinocarboxamide synthase, chloroplastic (411 aa).

The transit peptide at 1-53 directs the protein to the chloroplast; sequence MAQCVRSTLNPVRTPQSFTRKAYVKSPAFASVSFLRAVPEFNKYPKPCSLVMS.

This sequence belongs to the SAICAR synthetase family.

It localises to the plastid. The protein resides in the chloroplast. It carries out the reaction 5-amino-1-(5-phospho-D-ribosyl)imidazole-4-carboxylate + L-aspartate + ATP = (2S)-2-[5-amino-1-(5-phospho-beta-D-ribosyl)imidazole-4-carboxamido]succinate + ADP + phosphate + 2 H(+). The protein operates within purine metabolism; IMP biosynthesis via de novo pathway; 5-amino-1-(5-phospho-D-ribosyl)imidazole-4-carboxamide from 5-amino-1-(5-phospho-D-ribosyl)imidazole-4-carboxylate: step 1/2. The protein is Phosphoribosylaminoimidazole-succinocarboxamide synthase, chloroplastic (PUR7) of Arabidopsis thaliana (Mouse-ear cress).